A 165-amino-acid chain; its full sequence is Glucosamine 6-phosphate N-acetyltransferase (165 aa).

In terms of domain architecture, N-acetyltransferase spans 22 to 165 (FKVRPLAKDD…DDCNFMTQRF (144 aa)). Substrate is bound by residues T44, 92–95 (KFIH), and 104–106 (EDV). 114–119 (RQKLGA) contacts acetyl-CoA. Residues 135–136 (YK) and R164 contribute to the substrate site.

Belongs to the acetyltransferase family. GNA1 subfamily.

It carries out the reaction D-glucosamine 6-phosphate + acetyl-CoA = N-acetyl-D-glucosamine 6-phosphate + CoA + H(+). Its pathway is nucleotide-sugar biosynthesis; UDP-N-acetyl-alpha-D-glucosamine biosynthesis; N-acetyl-alpha-D-glucosamine 1-phosphate from alpha-D-glucosamine 6-phosphate (route I): step 1/2. This Caenorhabditis elegans protein is Glucosamine 6-phosphate N-acetyltransferase (gna-1).